The following is a 429-amino-acid chain: Lysophosphatidic acid phosphatase type 6 (429 aa).

The transit peptide at 1-32 (MISRVFKLRMWAPVGVLTSLTYCLHQRRVALA) directs the protein to the mitochondrion. A substrate binding region spans residues 58 to 169 (RHGARSPLKP…VFIRSTNIYR (112 aa)). His-59 acts as the Nucleophile in catalysis. Residue Asp-336 is the Proton donor of the active site.

This sequence belongs to the histidine acid phosphatase family. In terms of assembly, monomer. In terms of tissue distribution, detected in brain (at protein level).

It localises to the mitochondrion. The enzyme catalyses a phosphate monoester + H2O = an alcohol + phosphate. The catalysed reaction is 1-(9Z-octadecenoyl)-sn-glycero-3-phosphate + H2O = 1-(9Z-octadecenoyl)-sn-glycerol + phosphate. Its function is as follows. Hydrolyzes lysophosphatidic acid (LPA) containing a medium length fatty acid chain to the corresponding monoacylglycerol. Has highest activity with lysophosphatidic acid containing myristate (C14:0), monounsaturated oleate (C18:1) or palmitate (C16:0), and lower activity with C18:0 and C6:0 lysophosphatidic acid. The chain is Lysophosphatidic acid phosphatase type 6 (ACP6) from Bos taurus (Bovine).